A 94-amino-acid polypeptide reads, in one-letter code: Small ribosomal subunit protein bS6 (94 aa).

Belongs to the bacterial ribosomal protein bS6 family.

Functionally, binds together with bS18 to 16S ribosomal RNA. This Alkaliphilus metalliredigens (strain QYMF) protein is Small ribosomal subunit protein bS6.